The primary structure comprises 141 residues: Calcium-binding protein SPEC 2D (141 aa).

EF-hand domains follow at residues 10–42, 43–72, 73–107, and 108–141; these read DQIK…MKSV, GHVL…AMIL, DKKC…FDRQ, and ITED…MNFC. Asp-23, Asn-25, Asp-27, and Asn-29 together coordinate Ca(2+). Asp-84, Asp-86, Lys-90, Asp-95, Asp-121, Asp-125, Lys-127, and Glu-132 together coordinate Ca(2+).

In terms of tissue distribution, found in cell lineages giving rise to the aboral ectoderm, a squamous epithelium covering the surface of the late stage embryo and larva.

Its function is as follows. Calcium-binding protein involved in larval development and metamorphosis. Likely to function as calcium buffers mediating the transport of calcium from the sea water to the blastocoel where calcium is required for skeleton formation. This is Calcium-binding protein SPEC 2D (SPEC2D) from Strongylocentrotus purpuratus (Purple sea urchin).